Consider the following 394-residue polypeptide: Quinolinate synthase (394 aa).

H57 and S74 together coordinate iminosuccinate. A [4Fe-4S] cluster-binding site is contributed by C121. Iminosuccinate-binding positions include Y153–N155 and S174. Residue C250 participates in [4Fe-4S] cluster binding. Iminosuccinate contacts are provided by residues H276–E278 and T293. C340 is a binding site for [4Fe-4S] cluster.

Belongs to the quinolinate synthase family. Type 3 subfamily. Requires [4Fe-4S] cluster as cofactor.

It localises to the cytoplasm. The enzyme catalyses iminosuccinate + dihydroxyacetone phosphate = quinolinate + phosphate + 2 H2O + H(+). Its pathway is cofactor biosynthesis; NAD(+) biosynthesis; quinolinate from iminoaspartate: step 1/1. Its function is as follows. Catalyzes the condensation of iminoaspartate with dihydroxyacetone phosphate to form quinolinate. This is Quinolinate synthase from Nocardioides sp. (strain ATCC BAA-499 / JS614).